An 85-amino-acid chain; its full sequence is Beta-insect depressant toxin Lqh-dprIT3b (85 aa).

The first 21 residues, 1–21, serve as a signal peptide directing secretion; sequence MKLLLLLTISASMLIEGLVNA. Residues 22–82 form the LCN-type CS-alpha/beta domain; it reads DGYIRGGDGC…EWDYETNTCG (61 aa). 4 disulfide bridges follow: C31–C81, C35–C56, C42–C63, and C46–C65. Residue G82 is modified to Glycine amide.

The protein belongs to the long (4 C-C) scorpion toxin superfamily. Sodium channel inhibitor family. Beta subfamily. As to expression, expressed by the venom gland.

It localises to the secreted. Its function is as follows. Depressant insect beta-toxins cause a transient contraction paralysis followed by a slow flaccid paralysis. They bind voltage-independently at site-4 of sodium channels (Nav) and block action potentials, primarily by depolarizing the axonal membrane and suppressing the sodium current. This depressant toxin is active only on insects. It is found in a relatively small amount in the venom, and its activity on insects is 10-fold higher compared to other known depressant toxins. This Leiurus hebraeus (Hebrew deathstalker scorpion) protein is Beta-insect depressant toxin Lqh-dprIT3b.